The sequence spans 192 residues: Orotate phosphoribosyltransferase (192 aa).

116-124 (EDIVTTGLS) contacts 5-phospho-alpha-D-ribose 1-diphosphate. Positions 120 and 148 each coordinate orotate.

This sequence belongs to the purine/pyrimidine phosphoribosyltransferase family. PyrE subfamily. In terms of assembly, homodimer. Mg(2+) is required as a cofactor.

It carries out the reaction orotidine 5'-phosphate + diphosphate = orotate + 5-phospho-alpha-D-ribose 1-diphosphate. Its pathway is pyrimidine metabolism; UMP biosynthesis via de novo pathway; UMP from orotate: step 1/2. In terms of biological role, catalyzes the transfer of a ribosyl phosphate group from 5-phosphoribose 1-diphosphate to orotate, leading to the formation of orotidine monophosphate (OMP). This is Orotate phosphoribosyltransferase from Bartonella quintana (strain Toulouse) (Rochalimaea quintana).